Here is a 111-residue protein sequence, read N- to C-terminus: Probable 4-amino-4-deoxy-L-arabinose-phosphoundecaprenol flippase subunit ArnE (111 aa).

Helical transmembrane passes span 36 to 56 (IVLW…LWLL), 61 to 81 (VPVG…TLAA), and 88 to 108 (PVSP…VILG). An EamA domain is found at 40-109 (LGLALACLGL…IIGGIVILGS (70 aa)).

It belongs to the ArnE family. Heterodimer of ArnE and ArnF.

The protein localises to the cell inner membrane. It participates in bacterial outer membrane biogenesis; lipopolysaccharide biosynthesis. Its function is as follows. Translocates 4-amino-4-deoxy-L-arabinose-phosphoundecaprenol (alpha-L-Ara4N-phosphoundecaprenol) from the cytoplasmic to the periplasmic side of the inner membrane. In Shigella flexneri, this protein is Probable 4-amino-4-deoxy-L-arabinose-phosphoundecaprenol flippase subunit ArnE.